Here is a 304-residue protein sequence, read N- to C-terminus: ATP phosphoribosyltransferase (304 aa).

The protein belongs to the ATP phosphoribosyltransferase family. Long subfamily. Mg(2+) is required as a cofactor.

The protein localises to the cytoplasm. The enzyme catalyses 1-(5-phospho-beta-D-ribosyl)-ATP + diphosphate = 5-phospho-alpha-D-ribose 1-diphosphate + ATP. The protein operates within amino-acid biosynthesis; L-histidine biosynthesis; L-histidine from 5-phospho-alpha-D-ribose 1-diphosphate: step 1/9. With respect to regulation, feedback inhibited by histidine. In terms of biological role, catalyzes the condensation of ATP and 5-phosphoribose 1-diphosphate to form N'-(5'-phosphoribosyl)-ATP (PR-ATP). Has a crucial role in the pathway because the rate of histidine biosynthesis seems to be controlled primarily by regulation of HisG enzymatic activity. In Xanthomonas campestris pv. campestris (strain 8004), this protein is ATP phosphoribosyltransferase.